The primary structure comprises 915 residues: Probable inorganic carbon transporter subunit DabA (915 aa).

Residues Cys-392, Asp-394, His-566, and Cys-581 each contribute to the Zn(2+) site.

It belongs to the inorganic carbon transporter (TC 9.A.2) DabA family. As to quaternary structure, forms a complex with DabB. Requires Zn(2+) as cofactor.

It is found in the cell inner membrane. Its function is as follows. Part of an energy-coupled inorganic carbon pump. This is Probable inorganic carbon transporter subunit DabA from Nitrosospira multiformis (strain ATCC 25196 / NCIMB 11849 / C 71).